Here is a 667-residue protein sequence, read N- to C-terminus: Probable Na(+)/H(+) antiporter nhx-9 (667 aa).

8 helical membrane passes run 41–61 (VYVITVWLLIASLAKILFNLM), 73–93 (LLIIVGLALGWILHQTSLSGA), 97–117 (SHTFFLYLLPPIIFDAGYFMP), 128–148 (VLVFSVFGTIWNTFAIGGSLL), 165–185 (ILVFSALISAVDPVAVIAVFE), 192–212 (FLFINVFGEALFNDGVTVVLY), 236–256 (LSFFVVALGGAAVGIIFAIAA), and 268–288 (ILAPVFIFVLPYMAYLTAEMV). Asn310 carries an N-linked (GlcNAc...) asparagine glycan. 4 consecutive transmembrane segments (helical) span residues 325–345 (MLAQSSETVIFMFLGLSTISS), 351–371 (LYFICATLFFCLIYRAIGIVV), 390–410 (FIMSYGGLRGAIAYGLVVSIP), and 418–438 (MFITATIAVIYFTVFLQGITI). The segment at 637-667 (TEQLPSETPFHSGRRQSTGDLNATRRADFNV) is disordered. Thr644 is modified (phosphothreonine).

Belongs to the monovalent cation:proton antiporter 1 (CPA1) transporter (TC 2.A.36) family. In terms of processing, phosphorylated. In early stage larva, expressed in the twin excretory cell processes. At later larval stages, expression is more restricted, resulting in a 'beads on a chain' appearance.

Its subcellular location is the cell membrane. Its function is as follows. Serves some physiological function other than regulation of cellular pH. In Caenorhabditis elegans, this protein is Probable Na(+)/H(+) antiporter nhx-9 (nhx-9).